The chain runs to 397 residues: uncharacterized protein (397 aa).

12 helical membrane passes run 10 to 30 (FIIF…YAVM), 48 to 68 (GLLV…VTII), 76 to 96 (PVLL…ALAP), 106 to 126 (ILSA…ASEM), 141 to 161 (GGLT…GDVL), 165 to 185 (AVFS…MAAV), 209 to 229 (LFSF…YTFI), 242 to 262 (VGIT…NFFA), 274 to 294 (MIGV…IAIY), 296 to 316 (AAAI…PPLL), 334 to 354 (VSVS…GMIL), and 363 to 383 (LFAG…FAHL).

It belongs to the major facilitator superfamily.

Its subcellular location is the cell membrane. This is an uncharacterized protein from Bacillus subtilis (strain 168).